Here is a 342-residue protein sequence, read N- to C-terminus: 4-hydroxy-2-oxovalerate aldolase 2 (342 aa).

A Pyruvate carboxyltransferase domain is found at 8–260 (ITVHDMTLRD…ETGVDVFKIQ (253 aa)). 16–17 (RD) contributes to the substrate binding site. Asp17 serves as a coordination point for Mn(2+). The active-site Proton acceptor is the His20. Ser170 and His199 together coordinate substrate. 2 residues coordinate Mn(2+): His199 and His201. Residue Tyr290 coordinates substrate.

The protein belongs to the 4-hydroxy-2-oxovalerate aldolase family.

It catalyses the reaction (S)-4-hydroxy-2-oxopentanoate = acetaldehyde + pyruvate. The sequence is that of 4-hydroxy-2-oxovalerate aldolase 2 (mhpE) from Azoarcus sp. (strain BH72).